Reading from the N-terminus, the 34-residue chain is Potassium channel toxin alpha-KTx 6.2 (34 aa).

Disulfide bonds link Cys3–Cys24, Cys9–Cys29, Cys13–Cys19, and Cys31–Cys34. Cys34 carries the post-translational modification Cysteine amide.

Belongs to the short scorpion toxin superfamily. Potassium channel inhibitor family. Alpha-KTx 06 subfamily. Expressed by the venom gland.

It is found in the secreted. In terms of biological role, blocks voltage-gated potassium channels Kv1.2/KCNA2 (IC(50)=0.12-0.8 nM), KCa3.1/KCNN4 (IC(50)=1-2.2 nM), Shaker B (IC(50)=2.39-80 nM), Kv1.1/KCNA1 (IC(50)=37-45 or no activity, depending on the study), Kv1.3/KCNA3 (IC(50)=150-180 or no activity, depending on the study). The polypeptide is Potassium channel toxin alpha-KTx 6.2 (Scorpio palmatus (Israeli golden scorpion)).